The chain runs to 639 residues: Lipoteichoic acid synthase 1 (639 aa).

The Cytoplasmic segment spans residues 1 to 3 (MKK). The helical transmembrane segment at 4–24 (LFSYKLSFFVLAVILFWAKTY) threads the bilayer. Topologically, residues 25 to 41 (LSYKTEFNLGVKGTTQE) are extracellular. Residues 42-62 (ILLIFNPFSSAVFFLGLALLA) form a helical membrane-spanning segment. Topologically, residues 63-67 (KGRKS) are cytoplasmic. The helical transmembrane segment at 68 to 88 (AIIMLIIDFLMTFVLYANILF) threads the bilayer. The Extracellular segment spans residues 89–116 (YRFFDDFLTFPNIKQSGNVGNMGDGIFS). A helical membrane pass occupies residues 117–137 (IMAGHDIFYFLDIIILIAVLI). The Cytoplasmic portion of the chain corresponds to 138 to 150 (WRPELKEYKMKKR). The chain crosses the membrane as a helical span at residues 151–171 (FASLVILSGIALFFINLHYAE). At 172-639 (KDRPQLLTRT…YHYGKEKEIK (468 aa)) the chain is on the extracellular side. 2 residues coordinate Mn(2+): Glu-252 and Thr-297. Thr-297 is an active-site residue. His-413 lines the substrate pocket. Mn(2+) is bound by residues Asp-472 and His-473.

It belongs to the LTA synthase family. Proteolytically cleaved by the type I signal peptidases SipT and SipV.

The protein resides in the cell membrane. It localises to the secreted. It functions in the pathway cell wall biogenesis; lipoteichoic acid biosynthesis. Its function is as follows. Catalyzes the polymerization of lipoteichoic acid (LTA) polyglycerol phosphate, a reaction that presumably uses phosphatidylglycerol (PG) as substrate. The chain is Lipoteichoic acid synthase 1 (ltaS1) from Bacillus subtilis (strain 168).